We begin with the raw amino-acid sequence, 425 residues long: Isocitrate dehydrogenase [NADP] (425 aa).

Thr114 provides a ligand contact to NADP(+). Positions 123, 125, 129, 139, and 162 each coordinate D-threo-isocitrate. Residue Asp316 participates in Mg(2+) binding. Residues 348-354, Asn361, Tyr400, and Arg404 each bind NADP(+); that span reads HGTAPKY.

This sequence belongs to the isocitrate and isopropylmalate dehydrogenases family. Homodimer. Mg(2+) serves as cofactor. Mn(2+) is required as a cofactor.

It catalyses the reaction D-threo-isocitrate + NADP(+) = 2-oxoglutarate + CO2 + NADPH. Catalyzes the oxidative decarboxylation of isocitrate to 2-oxoglutarate and carbon dioxide with the concomitant reduction of NADP(+). This is Isocitrate dehydrogenase [NADP] (icd) from Helicobacter pylori (strain J99 / ATCC 700824) (Campylobacter pylori J99).